The sequence spans 146 residues: Pseudoazurin (146 aa).

The first 23 residues, 1–23 (MRNIAIKFAAAGILAMLAAPALA), serve as a signal peptide directing secretion. One can recognise a Plastocyanin-like domain in the interval 28–116 (VHMLNKGAEG…MGMIALIAVG (89 aa)). The Cu cation site is built by H63, C101, H104, and M109.

It depends on Cu cation as a cofactor.

Its subcellular location is the periplasm. Functionally, this soluble electron transfer copper protein is required for the inactivation of copper-containing nitrite reductase in the presence of oxygen. Serves as a direct electron donor to the nitrite reductase. The chain is Pseudoazurin from Alcaligenes faecalis.